The chain runs to 624 residues: APC membrane recruitment protein 2 (624 aa).

Disordered stretches follow at residues 77–111, 126–177, 195–230, 342–369, and 397–588; these read EEPC…SVAK, ENVK…GLIL, PLCE…PLNG, ADQD…SKKN, and FSMI…ELPR. Over residues 102–111 the composition is skewed to low complexity; the sequence is DVSSDSSVAK. 2 stretches are compositionally biased toward basic and acidic residues: residues 155-168 and 195-204; these read SKKD…KEGA and PLCEKEKSEE. The span at 352–363 shows a compositional bias: low complexity; sequence KGSKVVPGNGKK. Composition is skewed to basic and acidic residues over residues 422-435 and 450-469; these read REVK…DRNT and ERGD…RNSD.

This sequence belongs to the Amer family.

It localises to the cell membrane. Its function is as follows. Negative regulator of the canonical Wnt signaling pathway involved in neuroectodermal patterning. Acts by specifically binding phosphatidylinositol 4,5-bisphosphate (PtdIns(4,5)P2), translocating to the cell membrane and interacting with key regulators of the canonical Wnt signaling pathway, such as components of the beta-catenin destruction complex. The polypeptide is APC membrane recruitment protein 2 (amer2) (Xenopus laevis (African clawed frog)).